We begin with the raw amino-acid sequence, 293 residues long: 4-diphosphocytidyl-2-C-methyl-D-erythritol kinase (293 aa).

The active site involves K16. 99–109 contacts ATP; that stretch reads PMGAGLGGGSS. The active site involves D141.

Belongs to the GHMP kinase family. IspE subfamily.

It catalyses the reaction 4-CDP-2-C-methyl-D-erythritol + ATP = 4-CDP-2-C-methyl-D-erythritol 2-phosphate + ADP + H(+). It functions in the pathway isoprenoid biosynthesis; isopentenyl diphosphate biosynthesis via DXP pathway; isopentenyl diphosphate from 1-deoxy-D-xylulose 5-phosphate: step 3/6. Functionally, catalyzes the phosphorylation of the position 2 hydroxy group of 4-diphosphocytidyl-2C-methyl-D-erythritol. The chain is 4-diphosphocytidyl-2-C-methyl-D-erythritol kinase from Burkholderia orbicola (strain MC0-3).